Here is a 224-residue protein sequence, read N- to C-terminus: Claudin-17 (224 aa).

Residues Met-1–Gln-7 lie on the Cytoplasmic side of the membrane. A helical transmembrane segment spans residues Ile-8–Pro-28. The Extracellular segment spans residues Gln-29 to Arg-81. A helical membrane pass occupies residues Ala-82 to Met-102. Residues Lys-103–Val-124 are Cytoplasmic-facing. The chain crosses the membrane as a helical span at residues Leu-125–Ile-145. Over Arg-146–Ala-164 the chain is Extracellular. Residues Leu-165–Phe-185 traverse the membrane as a helical segment. Residues Cys-186–Val-224 are Cytoplasmic-facing.

Belongs to the claudin family. As to quaternary structure, cannot form tight junction strands on its own. Interacts with OCLN. As to expression, in the kidney, expressed in the proximal tubule and in the Henle's loop. In the distal convoluted tubule, not expressed in all tubules. Not detected in the collecting duct (at protein level).

The protein localises to the cell junction. The protein resides in the tight junction. It localises to the basolateral cell membrane. The catalysed reaction is chloride(in) = chloride(out). The enzyme catalyses hydrogencarbonate(in) = hydrogencarbonate(out). It catalyses the reaction bromide(in) = bromide(out). It carries out the reaction iodide(out) = iodide(in). The catalysed reaction is fluoride(in) = fluoride(out). The enzyme catalyses nitrate(in) = nitrate(out). It catalyses the reaction thiocyanate(in) = thiocyanate(out). Functionally, channel-forming tight junction protein with selectivity for anions, including chloride and hydrogencarbonate, and for solutes smaller than 9 Angstrom in diameter. In the kidney proximal tubule, may be involved in paracellular reabsorption of filtered anions. Does not affect water permeability. The protein is Claudin-17 (CLDN17) of Homo sapiens (Human).